The primary structure comprises 653 residues: Laccase ustL (653 aa).

A signal peptide spans 1–20 (MTSLTGLALLLCVLASQSWA). Plastocyanin-like domains follow at residues 31–143 (WEKG…RPKR) and 173–362 (VLSD…ATQV). Asparagine 74, asparagine 220, asparagine 235, asparagine 255, asparagine 277, asparagine 405, asparagine 463, and asparagine 479 each carry an N-linked (GlcNAc...) asparagine glycan. Residues 463-594 (NQTVGTEDEK…GGMSIALLDG (132 aa)) enclose the Plastocyanin-like 3 domain. The Cu cation site is built by histidine 501, histidine 504, histidine 506, histidine 576, cysteine 577, histidine 578, and histidine 582. N-linked (GlcNAc...) asparagine glycosylation occurs at asparagine 623.

Belongs to the multicopper oxidase family.

It catalyses the reaction 4 norrubrofusarin + O2 = 2 ustilaginoidin A + 2 H2O. It functions in the pathway secondary metabolite biosynthesis. Functionally, laccase; part of the gene cluster that mediates the biosynthesis of ustilaginoidins, dimeric gamma-naphthopyrones isolated from different fungal species. The first step in the biosynthesis of ustilaginoidins is the production of gamma-naphthopyrone precursor YWA1 by the non-reducing polyketide synthase ustP, via condensation of one acetyl-CoA starter unit with 6 malonyl-CoA units. YWA1 is then probably substrate of the ustZ to yield norrubrofusarin via a dehydration reaction. A key enzyme in the biosynthetic pathway is the laccase ustL, which catalyzes the oxidative dimerization of norrubrofusarin to ustilaginoidin A. It can produce the M- and P-atropisomers in varying amounts, depending on the reaction conditions. For the biosynthesis of 3-methylustilaginoid in derivatives such as chaetochromin A, a methylated derivative of YWA1 is required. The C-methylation is considered to be catalyzed by ustM, the phosphopantetheine attachment site of which indicates that it acts on the growing polyketide chain before release of the product. For the biosynthesis of chaetochromin A, it is assumed that saturation of the D2 double bond takes place before dimerization, and is probably catalyzed by an external reductase because no candidate gene was identified within the cluster. The protein is Laccase ustL of Ustilaginoidea virens (Rice false smut fungus).